A 198-amino-acid chain; its full sequence is Segregation and condensation protein B (198 aa).

Positions 167–198 are disordered; sequence PKLADPEADDPDQNEMDLFFDRFNQSKEQEEE. Positions 172–181 are enriched in acidic residues; that stretch reads PEADDPDQNE.

The protein belongs to the ScpB family. As to quaternary structure, homodimer. Homodimerization may be required to stabilize the binding of ScpA to the Smc head domains. Component of a cohesin-like complex composed of ScpA, ScpB and the Smc homodimer, in which ScpA and ScpB bind to the head domain of Smc. The presence of the three proteins is required for the association of the complex with DNA.

It is found in the cytoplasm. In terms of biological role, participates in chromosomal partition during cell division. May act via the formation of a condensin-like complex containing Smc and ScpA that pull DNA away from mid-cell into both cell halves. The protein is Segregation and condensation protein B of Listeria welshimeri serovar 6b (strain ATCC 35897 / DSM 20650 / CCUG 15529 / CIP 8149 / NCTC 11857 / SLCC 5334 / V8).